Reading from the N-terminus, the 285-residue chain is MLLTRRFSSALARSPLLPRSLPPPRAVPATPPAPRPPPRRLMSSSSSGWHHSSRPPPPPPSGADKDQLFRGLEAALGTTFSSEPLAPPPQPMILVISGPSGVGKDAVIQRLQEEREGMHFVVTATSRAKRPGEVDGKDYYFVTKEEFLTMIERKELLEYALVYGEYKGIPKQQIRDYMAKGYDIVLRVDIQGAATLREILGESAIFIFLVAESEEALVKRLIHRKTETSDMLLVRVATAREEVKRMNNFDYVVVNSEGNLEGAVKQVESIIDAEKAKVHKRTVNI.

Over residues 1–19 the composition is skewed to low complexity; sequence MLLTRRFSSALARSPLLPR. The transit peptide at 1–42 directs the protein to the chloroplast and mitochondrion; sequence MLLTRRFSSALARSPLLPRSLPPPRAVPATPPAPRPPPRRLM. Residues 1–66 are disordered; sequence MLLTRRFSSA…PPPPSGADKD (66 aa). The segment covering 20–36 has biased composition (pro residues); the sequence is SLPPPRAVPATPPAPRP. Residues 40 to 50 are compositionally biased toward low complexity; that stretch reads RLMSSSSSGWH. One can recognise a Guanylate kinase-like domain in the interval 91-272; sequence PMILVISGPS…AVKQVESIID (182 aa). Residue 98-105 coordinates ATP; the sequence is GPSGVGKD. Catalysis depends on residues R130, R224, and R235. N255 is an ATP binding site.

Belongs to the guanylate kinase family. As to quaternary structure, monomer.

Its subcellular location is the plastid. It is found in the chloroplast. It localises to the mitochondrion. It carries out the reaction GMP + ATP = GDP + ADP. Its function is as follows. Essential for recycling GMP and indirectly, cGMP. Essential for chloroplast differentiation at early stage of leaf development. May not be involved in the synthesis and maintenance of the organellar DNA during leaf development. This is Guanylate kinase 2, chloroplastic/mitochondrial (V2) from Oryza sativa subsp. japonica (Rice).